The sequence spans 356 residues: ATP-dependent 6-phosphofructokinase (356 aa).

Residues glycine 15, 78–79, and 115–118 each bind ATP; these read KG and GEGT. Residue glutamate 116 coordinates Mg(2+). Residues 138-140, arginine 175, 182-184, glutamate 235, arginine 272, and 278-281 contribute to the substrate site; these read TID, MGR, and HLQR. Aspartate 140 functions as the Proton acceptor in the catalytic mechanism.

This sequence belongs to the phosphofructokinase type A (PFKA) family. Mixed-substrate PFK group III subfamily. Homodimer or homotetramer. The cofactor is Mg(2+).

The protein localises to the cytoplasm. The enzyme catalyses beta-D-fructose 6-phosphate + ATP = beta-D-fructose 1,6-bisphosphate + ADP + H(+). It participates in carbohydrate degradation; glycolysis; D-glyceraldehyde 3-phosphate and glycerone phosphate from D-glucose: step 3/4. In terms of biological role, catalyzes the phosphorylation of D-fructose 6-phosphate to fructose 1,6-bisphosphate by ATP, the first committing step of glycolysis. This is ATP-dependent 6-phosphofructokinase from Chloroflexus aurantiacus (strain ATCC 29366 / DSM 635 / J-10-fl).